A 431-amino-acid chain; its full sequence is Shaggy-related protein kinase beta (431 aa).

The segment covering 12–24 (SGRNFVSSDNVGE) has biased composition (polar residues). A disordered region spans residues 12–65 (SGRNFVSSDNVGETETPRSKPNQNREETESTETTSYEKDSVSSSENSDHLPKEI). Basic and acidic residues-rich tracts occupy residues 26–39 (ETPR…REET) and 46–65 (SYEK…PKEI). The region spanning 102-386 (YRAEHVIGTG…ALEACAHPFF (285 aa)) is the Protein kinase domain. Residues 108-116 (IGTGSFGVV) and Lys131 each bind ATP. Residue Asp227 is the Proton acceptor of the active site. Phosphotyrosine is present on Tyr262.

This sequence belongs to the protein kinase superfamily. CMGC Ser/Thr protein kinase family. GSK-3 subfamily. Post-translationally, autophosphorylated mainly on threonine and serine residues.

It catalyses the reaction L-seryl-[protein] + ATP = O-phospho-L-seryl-[protein] + ADP + H(+). The enzyme catalyses L-threonyl-[protein] + ATP = O-phospho-L-threonyl-[protein] + ADP + H(+). In terms of biological role, may mediate extracellular signals to regulate transcription in differentiating cells. The sequence is that of Shaggy-related protein kinase beta from Arabidopsis thaliana (Mouse-ear cress).